Reading from the N-terminus, the 221-residue chain is GFP-like non-fluorescent chromoprotein (221 aa).

The segment at residues 62-64 (QYG) is a cross-link (2-iminomethyl-5-imidazolinone (Gln-Gly)). Position 63 is a 2,3-didehydrotyrosine (Y63).

It belongs to the GFP family. As to quaternary structure, homotetramer. Contains a chromophore consisting of modified amino acid residues. The chromophore is formed by autocatalytic backbone condensation between Xaa-N and Gly-(N+2), oxidation of Tyr-(N+1) to didehydrotyrosine, and formation of a double bond to the alpha-amino nitrogen of residue Xaa-N. Maturation of the chromophore requires nothing other than molecular oxygen. The precise stereochemistry of the tyrosine has not been determined.

In terms of biological role, non-fluorescent pigment protein that is lilac in color. The protein is GFP-like non-fluorescent chromoprotein of Goniopora tenuidens (Anemone coral).